The following is a 199-amino-acid chain: dTTP/UTP pyrophosphatase (199 aa).

Catalysis depends on D73, which acts as the Proton acceptor.

This sequence belongs to the Maf family. YhdE subfamily. The cofactor is a divalent metal cation.

The protein localises to the cytoplasm. The catalysed reaction is dTTP + H2O = dTMP + diphosphate + H(+). It catalyses the reaction UTP + H2O = UMP + diphosphate + H(+). Nucleoside triphosphate pyrophosphatase that hydrolyzes dTTP and UTP. May have a dual role in cell division arrest and in preventing the incorporation of modified nucleotides into cellular nucleic acids. This chain is dTTP/UTP pyrophosphatase, found in Caldicellulosiruptor saccharolyticus (strain ATCC 43494 / DSM 8903 / Tp8T 6331).